Reading from the N-terminus, the 80-residue chain is Defensin-like protein 291 (80 aa).

An N-terminal signal peptide occupies residues 1–29 (MAASKTTIFIVFVLCLSCTLLVNISGIQA). Cystine bridges form between cysteine 50/cysteine 70, cysteine 56/cysteine 75, and cysteine 62/cysteine 77.

It belongs to the DEFL family.

The protein localises to the secreted. The protein is Defensin-like protein 291 of Arabidopsis thaliana (Mouse-ear cress).